Here is a 178-residue protein sequence, read N- to C-terminus: Endoribonuclease YbeY (178 aa).

Zn(2+) contacts are provided by histidine 118, histidine 122, and histidine 128.

It belongs to the endoribonuclease YbeY family. The cofactor is Zn(2+).

It localises to the cytoplasm. Single strand-specific metallo-endoribonuclease involved in late-stage 70S ribosome quality control and in maturation of the 3' terminus of the 16S rRNA. The sequence is that of Endoribonuclease YbeY from Mycobacterium leprae (strain Br4923).